The chain runs to 137 residues: Large ribosomal subunit protein uL16c (137 aa).

This sequence belongs to the universal ribosomal protein uL16 family. Part of the 50S ribosomal subunit.

It is found in the plastid. The protein resides in the chloroplast. This Thalassiosira pseudonana (Marine diatom) protein is Large ribosomal subunit protein uL16c.